Reading from the N-terminus, the 541-residue chain is Protein panoramix (541 aa).

The interval Met1 to Phe169 is interaction with Piwi. Disordered stretches follow at residues Ser52–Ser75 and Thr198–Asp281. Residues Met194 to Ser216 are a coiled coil. Residues Lys203–Asn220 are compositionally biased toward basic residues. Composition is skewed to basic and acidic residues over residues Asp241 to Arg251 and Ser269 to Glu279. The interval Leu315–Glu343 is nxf2-interacting region (NIR). The stretch at Leu323 to Glu343 forms a coiled coil. Positions Thr387–Ala446 are necessary for interaction with nxf2 and protein stability.

In the ovaries, part of a complex composed of at least Panx, nxf2, piwi and Nxt1. The complex is knowns as Panx-induced cotranscriptional silencing (PICTS) complex, Panx-nxf2-dependent TAP/p15 silencing (Pandas complex), SFiNX (silencing factor interacting nuclear export variant) or piwi-Panx-nxf2-p15 (PPNP) complex. Interacts (via NIR region) with nxf2 (via TAP-C domain); the interaction is direct. As to expression, expressed in female gonads (at protein level).

It localises to the nucleus. Functionally, acts via the piwi-interacting RNA (piRNA) pathway which mediates the repression of transposable elements during meiosis by forming complexes composed of piRNAs and piwi proteins and governs the methylation and subsequent repression of transposons. Required for transcriptional silencing of transposons targeted by piwi and confers its effects by interacting with nascent RNA transcripts. Likely to be recruited to nascent transcripts cotranscriptionally by piwi and to recruit additional factors involved in transcriptional silencing. In the ovaries, forms a complex with nxf2, piwi and Nxt1 which acts as effectors of cotranscriptional transposon silencing. The interaction with nxf2 stabilizes the nuclear protein complex. The chain is Protein panoramix from Drosophila melanogaster (Fruit fly).